A 608-amino-acid polypeptide reads, in one-letter code: 1-deoxy-D-xylulose-5-phosphate synthase (608 aa).

Thiamine diphosphate is bound by residues His80 and 121-123 (GHS). Asp152 is a binding site for Mg(2+). Thiamine diphosphate is bound by residues 153–154 (GA), Asn181, Tyr282, and Glu357. Asn181 is a binding site for Mg(2+).

It belongs to the transketolase family. DXPS subfamily. As to quaternary structure, homodimer. Mg(2+) is required as a cofactor. It depends on thiamine diphosphate as a cofactor.

The enzyme catalyses D-glyceraldehyde 3-phosphate + pyruvate + H(+) = 1-deoxy-D-xylulose 5-phosphate + CO2. It functions in the pathway metabolic intermediate biosynthesis; 1-deoxy-D-xylulose 5-phosphate biosynthesis; 1-deoxy-D-xylulose 5-phosphate from D-glyceraldehyde 3-phosphate and pyruvate: step 1/1. Functionally, catalyzes the acyloin condensation reaction between C atoms 2 and 3 of pyruvate and glyceraldehyde 3-phosphate to yield 1-deoxy-D-xylulose-5-phosphate (DXP). This Buchnera aphidicola subsp. Acyrthosiphon pisum (strain 5A) protein is 1-deoxy-D-xylulose-5-phosphate synthase.